Reading from the N-terminus, the 202-residue chain is Transmembrane protein 223 (202 aa).

The Mitochondrial matrix segment spans residues 1-43 (MAAPGRRWSVLLFRALQSLSARRALHDTAPPRDVLLFEHERGR). The helical transmembrane segment at 44–64 (FFAVLGLFCAGQGVFWASLAI) threads the bilayer. Topologically, residues 65 to 97 (ASLARPPTPVRPTDAKTPDHGGLDLRSTLWRYG) are mitochondrial intermembrane. Residues 98–118 (LAVGCGAIGSLVLGAGLLFSL) form a helical membrane-spanning segment. Topologically, residues 119–202 (RSVRSVMLRA…DNTVGAYRSL (84 aa)) are mitochondrial matrix.

Belongs to the TMEM223 family. In terms of assembly, associates with the mitochondrial ribosome.

The protein localises to the mitochondrion inner membrane. Functionally, mitochondrial ribosome-associated protein involved in the first steps of cytochrome c oxidase complex (complex IV) biogenesis. Stimulates the translation of MT-CO1 mRNA and is a constituent of early MT-CO1 assembly intermediates. This is Transmembrane protein 223 from Bos taurus (Bovine).